The chain runs to 66 residues: Cytochrome c oxidase subunit 26, mitochondrial (66 aa).

Residues 1 to 8 (MFFSQVLR) constitute a mitochondrion transit peptide. Residues 9–27 (SSARAAPIKRYTGGRIGES) lie on the Mitochondrial matrix side of the membrane. Residues 28–64 (WVITEGRRLIPEIFQWSAVLSVCLGWPGAVYFFSKAR) form a helical membrane-spanning segment. Residues 65–66 (KA) lie on the Mitochondrial intermembrane side of the membrane.

It belongs to the fungal cytochrome c oxidase subunit 26 family. In terms of assembly, component of the cytochrome c oxidase (complex IV, CIV), a multisubunit enzyme composed of 12 subunits. The complex is composed of a catalytic core of 3 subunits COX1, COX2 and COX3, encoded in the mitochondrial DNA, and 9 supernumerary subunits COX4, COX5A (or COX5B), COX6, COX7, COX8, COX9, COX12, COX13 and COX26, which are encoded in the nuclear genome. The complex exists as a monomer or a dimer and forms supercomplexes (SCs) in the inner mitochondrial membrane with a dimer of ubiquinol-cytochrome c oxidoreductase (cytochrome b-c1 complex, complex III, CIII), resulting in 2 different assemblies (supercomplexes III(2)IV and III(2)IV(2)).

It is found in the mitochondrion inner membrane. Component of the cytochrome c oxidase, the last enzyme in the mitochondrial electron transport chain which drives oxidative phosphorylation. The respiratory chain contains 3 multisubunit complexes succinate dehydrogenase (complex II, CII), ubiquinol-cytochrome c oxidoreductase (cytochrome b-c1 complex, complex III, CIII) and cytochrome c oxidase (complex IV, CIV), that cooperate to transfer electrons derived from NADH and succinate to molecular oxygen, creating an electrochemical gradient over the inner membrane that drives transmembrane transport and the ATP synthase. Cytochrome c oxidase is the component of the respiratory chain that catalyzes the reduction of oxygen to water. Electrons originating from reduced cytochrome c in the intermembrane space (IMS) are transferred via the dinuclear copper A center (CU(A)) of COX2 and heme A of COX1 to the active site in COX1, a binuclear center (BNC) formed by heme A3 and copper B (CU(B)). The BNC reduces molecular oxygen to 2 water molecules using 4 electrons from cytochrome c in the IMS and 4 protons from the mitochondrial matrix. In Saccharomyces cerevisiae (strain ATCC 204508 / S288c) (Baker's yeast), this protein is Cytochrome c oxidase subunit 26, mitochondrial (COX26).